Reading from the N-terminus, the 142-residue chain is Glia maturation factor beta (142 aa).

S2 is subject to N-acetylserine. In terms of domain architecture, ADF-H spans 4–139 (SLVVCDVAED…TEEWLREKLG (136 aa)).

The protein belongs to the actin-binding proteins ADF family. GMF subfamily. In terms of processing, phosphorylated; stimulated by phorbol ester.

Functionally, this protein causes differentiation of brain cells, stimulation of neural regeneration, and inhibition of proliferation of tumor cells. This is Glia maturation factor beta (GMFB) from Homo sapiens (Human).